Consider the following 116-residue polypeptide: Large ribosomal subunit protein bL17 (116 aa).

The protein belongs to the bacterial ribosomal protein bL17 family. As to quaternary structure, part of the 50S ribosomal subunit. Contacts protein L32.

This chain is Large ribosomal subunit protein bL17, found in Prochlorococcus marinus (strain MIT 9301).